The chain runs to 131 residues: Guanyl-specific ribonuclease F1 (131 aa).

The first 25 residues, 1–25, serve as a signal peptide directing secretion; the sequence is MLFFKSIASLAALVSLAVASPIESR. Q26 is subject to Pyrrolidone carboxylic acid. 2 disulfides stabilise this stretch: C31-C127 and C49-C108. Residue H65 is part of the active site. Catalysis depends on E83, which acts as the Proton acceptor. H116 serves as the catalytic Proton donor.

Belongs to the ribonuclease N1/T1 family.

It catalyses the reaction [RNA] containing guanosine + H2O = an [RNA fragment]-3'-guanosine-3'-phosphate + a 5'-hydroxy-ribonucleotide-3'-[RNA fragment].. This chain is Guanyl-specific ribonuclease F1, found in Fusarium fujikuroi (Bakanae and foot rot disease fungus).